A 160-amino-acid chain; its full sequence is MPQITLVFISLSGNTLSFVKRLSLYLADNYDYHVKQINIKDLKHETFPVKEEFVAILPTYLEGGNGVDSGDVEILTTPLGEFIAAHGNAQRCLGIIGSGNKNFNHQYCLTAKQYAKRFGFPLLGDFELRGTPDDISRLAQVIMEASSRHSSNDTQTLPNS.

It belongs to the NrdI family.

This Streptococcus pyogenes serotype M1 protein is Putative NrdI-like protein.